The sequence spans 332 residues: MILGIESSCDDSSIALMDENSLKLNYFSKISQEIKHAKFGGVVPELAARLHTKALPEMIEKIKPYFSEISAIAVTNEPGLSVSLIGGVSMAKALSISLNKPLIAVNHLVGHIFSVFLDKKEIFPLGVLLVSGGHTLVLDISANGKISVLAKTGDDSFGESFDKVAKMLGLDYPGGALIENLAKNCDGNLNFTIPLLHDKRLEYSFSGLKNQVRMEIEKAGEISQSVQENIAASFQKTAIAHIMDKLSKIYEMKKWQNFAVVGGASANSALRTKLENLANKYGSTLHLAPLKFCSDNAAMIARAGVYKYNKKEFINYKNLDIVPHLNYENFKI.

The Fe cation site is built by histidine 107 and histidine 111. Residues 129–133, aspartate 162, glycine 175, and asparagine 267 each bind substrate; that span reads LVSGG. Residue aspartate 295 coordinates Fe cation.

This sequence belongs to the KAE1 / TsaD family. Fe(2+) is required as a cofactor.

It is found in the cytoplasm. The catalysed reaction is L-threonylcarbamoyladenylate + adenosine(37) in tRNA = N(6)-L-threonylcarbamoyladenosine(37) in tRNA + AMP + H(+). In terms of biological role, required for the formation of a threonylcarbamoyl group on adenosine at position 37 (t(6)A37) in tRNAs that read codons beginning with adenine. Is involved in the transfer of the threonylcarbamoyl moiety of threonylcarbamoyl-AMP (TC-AMP) to the N6 group of A37, together with TsaE and TsaB. TsaD likely plays a direct catalytic role in this reaction. In Campylobacter hominis (strain ATCC BAA-381 / DSM 21671 / CCUG 45161 / LMG 19568 / NCTC 13146 / CH001A), this protein is tRNA N6-adenosine threonylcarbamoyltransferase.